Consider the following 1041-residue polypeptide: Sarcoplasmic/endoplasmic reticulum calcium ATPase 2 (1041 aa).

The Cytoplasmic portion of the chain corresponds to 1-48 (MENAHTKTVEEVLAYFGVNESTGLSLEQVKKLKEKWGSNELPAEEGKT). The helical transmembrane segment at 49–69 (LLELVIEQFEDLLVRILLLAA) threads the bilayer. Residues 70–89 (CISFVLAWFEEGEETITAFV) lie on the Lumenal side of the membrane. The chain crosses the membrane as a helical span at residues 90–110 (EPFVILLILVANAIVGVWQER). The Cytoplasmic portion of the chain corresponds to 111-253 (NAENAIEALK…QERTPLQQKL (143 aa)). Residues 254-273 (DEFGEQLSKVISLICIAVWI) form a helical membrane-spanning segment. At 274–295 (INIGHFNDPVHGGSWIRGAIYY) the chain is on the lumenal side. Residues 296 to 313 (FKIAVALAVAAIPEGLPA) form a helical membrane-spanning segment. Positions 304, 305, 307, and 309 each coordinate Ca(2+). Topologically, residues 314-756 (VITTCLALGT…EEGRAIYNNM (443 aa)) are cytoplasmic. Asp-351 serves as the catalytic 4-aspartylphosphate intermediate. Mg(2+) contacts are provided by Asp-351 and Thr-353. ATP-binding residues include Thr-353, Glu-442, Arg-489, Lys-514, Arg-559, Thr-624, Gly-625, Asp-626, Arg-677, and Lys-683. Asp-702 is a Mg(2+) binding site. Residue Asn-705 coordinates ATP. The chain crosses the membrane as a helical span at residues 757-776 (KQFIRYLISSNVGEVVCIFL). Asn-767 and Glu-770 together coordinate Ca(2+). Residues 777-786 (TAALGFPEAL) are Lumenal-facing. Residues 787–807 (IPVQLLWVNLVTDGLPATALG) traverse the membrane as a helical segment. The tract at residues 787-807 (IPVQLLWVNLVTDGLPATALG) is interaction with PLN. Positions 795, 798, and 799 each coordinate Ca(2+). Topologically, residues 808-827 (FNPPDLDIMNKPPRNPKEPL) are cytoplasmic. The helical transmembrane segment at 828-850 (ISGWLFFRYLAIGCYVGAATVGA) threads the bilayer. Residues 851–896 (AAWWFIAADGGPRVTFYQLSHFLQCKEDNPDFSGVDCVVFESPYPM) are Lumenal-facing. A disulfide bond links Cys-875 and Cys-887. A helical transmembrane segment spans residues 897–916 (TMALSVLVTIEMCNALNSLS). Glu-907 lines the Ca(2+) pocket. Over 917 to 929 (ENQSLMRMPPWEN) the chain is Cytoplasmic. A helical membrane pass occupies residues 930-948 (IWLVGAICLSMSLHFLILY). Residues 931 to 942 (WLVGAICLSMSL) are interaction with PLN. The Lumenal portion of the chain corresponds to 949 to 963 (VEPLPIIFQITPLNV). Residues 964 to 984 (TQWLMVLKISLPVILLDETLK) traverse the membrane as a helical segment. Over 985–1041 (YVARNYLEPGKDSVQPATKPCSLSACTEGVSWPFVFITLPLVIWLYSTDTNFSDMFW) the chain is Cytoplasmic.

This sequence belongs to the cation transport ATPase (P-type) (TC 3.A.3) family. Type IIA subfamily. As to quaternary structure, interacts with sarcolipin (SLN). Interacts with phospholamban (PLN). Interacts with myoregulin (MRLN). Interacts with DWORF. Interacts with TMX2. It depends on Mg(2+) as a cofactor. Only isoform 2 is detected in heart, while both isoforms are expressed in brain, with isoform 2 being predominant.

It localises to the endoplasmic reticulum membrane. It is found in the sarcoplasmic reticulum membrane. It carries out the reaction Ca(2+)(in) + ATP + H2O = Ca(2+)(out) + ADP + phosphate + H(+). With respect to regulation, reversibly inhibited by phospholamban (PLN) at low calcium concentrations. Inhibited by sarcolipin (SLN) and myoregulin (MRLN). Enhanced by DWORF; DWORF increases activity by displacing sarcolipin (SLN), phospholamban (PLN) and myoregulin (MRLN). Functionally, this magnesium-dependent enzyme catalyzes the hydrolysis of ATP coupled with the translocation of calcium from the cytosol to the sarcoplasmic reticulum lumen. Isoform SERCA2A is involved in the regulation of the contraction/relaxation cycle. May act as a regulator of TNFSF11-mediated Ca(2+) signaling during osteoclastogenesis. This chain is Sarcoplasmic/endoplasmic reticulum calcium ATPase 2 (ATP2A2), found in Gallus gallus (Chicken).